A 198-amino-acid polypeptide reads, in one-letter code: Nucleoid occlusion factor SlmA (198 aa).

Positions 11-71 (PNRKHQILES…GLIDFIEESI (61 aa)) constitute an HTH tetR-type domain. Positions 34–53 (TTAKLAAEVGFSEAALYRHF) form a DNA-binding region, H-T-H motif.

The protein belongs to the nucleoid occlusion factor SlmA family. In terms of assembly, homodimer. Interacts with FtsZ.

It localises to the cytoplasm. Its subcellular location is the nucleoid. Functionally, required for nucleoid occlusion (NO) phenomenon, which prevents Z-ring formation and cell division over the nucleoid. Acts as a DNA-associated cell division inhibitor that binds simultaneously chromosomal DNA and FtsZ, and disrupts the assembly of FtsZ polymers. SlmA-DNA-binding sequences (SBS) are dispersed on non-Ter regions of the chromosome, preventing FtsZ polymerization at these regions. The protein is Nucleoid occlusion factor SlmA of Colwellia psychrerythraea (strain 34H / ATCC BAA-681) (Vibrio psychroerythus).